A 1214-amino-acid polypeptide reads, in one-letter code: MATLIPVNGGHPAASGQSSNVEATYEDMFKEITRKLYGEETGNGLHTLGTPVAQVATSGPTAVPEGEQRSFTNLQQLDRSAAPSIEYESSAAGASGNNVATTQANVIQQQQQQQQQAESGNSVVVTASSGATVVPAPSVAAVGGFKSEDHLSTAFGLAALMQNGFAAGQAGLLKAGEQQQRWAQDGSGLVAAAAAEPQLVQWTSGGKLQSYAHVNQQQQQQQQPHQSTPKSKKHRQEHAAELIYASPSTSANAAQNLAQSTPTSAPSNSSGGSTSSSGGGGGRKKAAQAAAAAAAANGVHIQKRYACTHCPYSTDRRDLYTRHENIHKDEKPFQCYACLKQFNRADHVKKHFLRMHRELQYDINKTRRHVSAGSGSSGSGSSGSGSHHSGGRGNVTINSAGVNIDNAFLEAQRHPTSSSMSIVETIEAVASATDMPLAQLKQEKMDDGAGVVLPLHVGVMQQPVASSSSGSSGSHGGNGNGGSGSGLLKPKREKRFTCCYCPWSGADKWGLKRHLNTHTKPFVCLLCDYKAARSERLATHVLKVHNKRACSKCSYLADTQEEYQAHMSDVHGNVGNANGGGGAVTIYTTTTNEGVAGGGGGGGGGISGNISGGGPLQEIIVNPSSMVGWRLSANGSLIPPHDLLTGGLPNAATQKRGSERLFQYLEAEGSDPEDYARLLKMDAISRNTASVAQDFHKAGGVHELKIPANHQLLFNNKLPSQWTTREAAALLYSLSNMGGGSASSVSGSQRQKFGMRARQHSTGEDDENTPSSASSSSFSGDEFNMSATSPLKLSRHAIKLEKMDEMDAKDMGPTKAMMATAFLEAANYEQTAIELLASKRKIKVENDNDEDQENQQHQPHQQHHSQQQQQQRLQLIKSSPAYKLNNNNNNNSNNNNYYKDKTSHRNAVHHHRQDDKENNKTKSPGTAAVSVAAAAATSPPSISGPSNQTPFLTQMEYQNLNRIGTQFQNYVKDIINKYYAAETPLMLAAAAAALPTATTTGQQQQPELDIENLSPSKRRRLLSETEEYIEYLRNKEDITLTIAPKVQPPAPVTSLLKRQLDLSTPRRSPKKAAPAHSNSASNASRKSLNQLATLLPLLADAASQQEYLAAPLDFSKKSSSRKQAQPKKIRLTPEAVVTLLRDKYLNRMVRQRLGCLKCNQLRKNSSISFNYHTLGSLALHKYWRHGRLGSSSTRREKLQAALQKRISRGQADKC.

3 disordered regions span residues 1 to 20, 213 to 238, and 250 to 284; these read MATLIPVNGGHPAASGQSSN, HVNQQQQQQQQPHQSTPKSKKHRQEH, and SANAAQNLAQSTPTSAPSNSSGGSTSSSGGGGGRK. The segment covering 258–276 has biased composition (low complexity); sequence AQSTPTSAPSNSSGGSTSS. C2H2-type zinc fingers lie at residues 305-327 and 333-356; these read YACTHCPYSTDRRDLYTRHENIH and FQCYACLKQFNRADHVKKHFLRMH. 2 disordered regions span residues 367 to 397 and 463 to 488; these read RRHVSAGSGSSGSGSSGSGSHHSGGRGNVTI and PVASSSSGSSGSHGGNGNGGSGSGLL. Positions 473–485 are enriched in gly residues; that stretch reads GSHGGNGNGGSGS. 2 C2H2-type zinc fingers span residues 496–518 and 522–545; these read FTCCYCPWSGADKWGLKRHLNTH and FVCLLCDYKAARSERLATHVLKVH. Disordered regions lie at residues 741–790, 848–946, and 1062–1084; these read SASS…ATSP, NDED…SGPS, and LSTPRRSPKKAAPAHSNSASNAS. 4 stretches are compositionally biased toward low complexity: residues 855–871, 885–896, 923–946, and 1071–1084; these read QQHQPHQQHHSQQQQQQ, NNNNNNNSNNNN, SPGTAAVSVAAAAATSPPSISGPS, and KAAPAHSNSASNAS.

Expressed in the PNS and CNS. In early blastoderm stages, it is ubiquitously expressed, then, before stage 5, it disappears from the poles of the embryo and faint stripes are visible. At stage 5, it also accumulates in the dorsal region, cephalic furrow ectodermal patches between the tracheal pits, where neurons of the PNS appear. In older embryos (stage 15) a strong expression is mostly restricted to the central nervous system (CNS) and PNS. In PNS, the pattern suggests that expression occur in many of the neurons of the ventral, lateral and dorsal clusters of neurons. In third instar wing disks, it is expressed in rows of cells on either side of the prospective anterior wing margin and in groups of cells that coincide with proneural clusters of ac/sc expression. Also expressed independently of ac/sc in certain areas of the disk, such as the postnotum and posterior dorsal proximal wing. Expressed in the proneural clusters of the leg disks and in the eye/antenna disk.

It localises to the nucleus. Probable transcription factor involved in the development of the adult pattern of macrochaetae. Required for accumulation of achaete (ac) and scute (sc) in proneural clusters. Probably acts by binding to the proneural cluster-specific enhancers of the ac/sc complex and increasing enhancer efficiency, thereby acting as a stimulator of ac/sc expression in proneural clusters. Also required for correct development of the embryonic/larval peripheral nervous system (PNS). This is Protein charlatan (chn) from Drosophila melanogaster (Fruit fly).